Here is a 247-residue protein sequence, read N- to C-terminus: UPF0280 protein Mevan_0550 (247 aa).

The protein belongs to the UPF0280 family.

This is UPF0280 protein Mevan_0550 from Methanococcus vannielii (strain ATCC 35089 / DSM 1224 / JCM 13029 / OCM 148 / SB).